The chain runs to 451 residues: Probable multidrug resistance protein NorM (451 aa).

The next 12 helical transmembrane spans lie at 23 to 43 (GPVV…TAVI), 53 to 73 (AAAY…GVML), 101 to 121 (LALL…FVLP), 132 to 152 (LVAA…AFIA), 169 to 189 (VALT…FGWG), 194 to 214 (LGLA…AALL), 243 to 263 (WPIG…TLLM), 277 to 297 (TMQT…ATGV), 316 to 336 (LVGL…ELAA), 355 to 375 (LIAA…MDGL), 391 to 411 (VPLL…GSVL), and 422 to 442 (LWFG…GRFL).

Belongs to the multi antimicrobial extrusion (MATE) (TC 2.A.66.1) family.

It is found in the cell membrane. Functionally, multidrug efflux pump. This is Probable multidrug resistance protein NorM (norM) from Deinococcus radiodurans (strain ATCC 13939 / DSM 20539 / JCM 16871 / CCUG 27074 / LMG 4051 / NBRC 15346 / NCIMB 9279 / VKM B-1422 / R1).